A 181-amino-acid chain; its full sequence is UPF0302 protein LMOf2365_1950 (181 aa).

It belongs to the UPF0302 family.

The sequence is that of UPF0302 protein LMOf2365_1950 from Listeria monocytogenes serotype 4b (strain F2365).